The sequence spans 146 residues: Large ribosomal subunit protein uL24 (146 aa).

The disordered stretch occupies residues 1–33 (MKYNPRVTSSRRRNRKPHFTASSSERRVXMSSP). Positions 9-18 (SSRRRNRKPH) are enriched in basic residues.

It belongs to the universal ribosomal protein uL24 family.

The protein is Large ribosomal subunit protein uL24 (RPL26) of Brassica campestris (Field mustard).